Consider the following 857-residue polypeptide: Autoinducer 2 sensor kinase/phosphatase LuxQ (857 aa).

2 helical membrane passes run 14–34 (IASFITHAVVVVMGVLIVSVL) and 283–303 (FWMAFALISMIGVSIASRWWL). One can recognise a Histidine kinase domain in the interval 486-706 (KMSHELRTPL…RFEIQLPIEL (221 aa)). At histidine 489 the chain carries Phosphohistidine; by autocatalysis. The Response regulatory domain occupies 731-846 (RVLLVEDNHT…TLHKALEHFK (116 aa)). At aspartate 780 the chain carries 4-aspartylphosphate.

In terms of assembly, binds the complex formed by AI-2 and LuxP.

It localises to the cell inner membrane. It carries out the reaction ATP + protein L-histidine = ADP + protein N-phospho-L-histidine.. At low cell density, in absence of AI-2 (autoinducer 2), LuxQ has a kinase activity and autophosphorylates on a histidine residue. The phosphoryl group is then transferred to an aspartate residue in the response regulator domain. The phosphoryl group is transferred to LuxU, and ultimately to LuxO. At high cell density, in the presence of AI-2, the kinase activity is inactivated, and the response regulator domain has a phosphatase activity. This is Autoinducer 2 sensor kinase/phosphatase LuxQ (luxQ) from Vibrio cholerae serotype O1 (strain ATCC 39315 / El Tor Inaba N16961).